Consider the following 622-residue polypeptide: tRNA uridine 5-carboxymethylaminomethyl modification enzyme MnmG (622 aa).

Position 10–15 (10–15 (GGGHAG)) interacts with FAD. 269 to 283 (GPRYCPSVEDKIVKF) is an NAD(+) binding site.

This sequence belongs to the MnmG family. As to quaternary structure, homodimer. Heterotetramer of two MnmE and two MnmG subunits. FAD is required as a cofactor.

Its subcellular location is the cytoplasm. In terms of biological role, NAD-binding protein involved in the addition of a carboxymethylaminomethyl (cmnm) group at the wobble position (U34) of certain tRNAs, forming tRNA-cmnm(5)s(2)U34. This chain is tRNA uridine 5-carboxymethylaminomethyl modification enzyme MnmG, found in Bartonella quintana (strain Toulouse) (Rochalimaea quintana).